The following is a 257-amino-acid chain: tRNA pseudouridine synthase A (257 aa).

Catalysis depends on aspartate 43, which acts as the Nucleophile. Tyrosine 94 is a binding site for substrate.

It belongs to the tRNA pseudouridine synthase TruA family.

The catalysed reaction is uridine(38/39/40) in tRNA = pseudouridine(38/39/40) in tRNA. Its function is as follows. Formation of pseudouridine at positions 38, 39 and 40 in the anticodon stem and loop of transfer RNAs. This is tRNA pseudouridine synthase A from Pyrobaculum calidifontis (strain DSM 21063 / JCM 11548 / VA1).